The primary structure comprises 604 residues: Baculoviral IAP repeat-containing protein 3 (604 aa).

3 BIR repeats span residues 29 to 96 (ELYR…CRFV), 169 to 235 (ENAR…CPFI), and 255 to 322 (HAAR…CEYL). Positions 292, 295, 312, and 319 each coordinate Zn(2+). A CARD domain is found at 439–529 (KESNDLLLIR…VLYEHLFVQQ (91 aa)). The segment at 557–592 (CKVCMDKEVSIVFIPCGHLVVCKDCAPSLRKCPICR) adopts an RING-type zinc-finger fold.

Belongs to the IAP family. Interacts with PRSS25; interaction inhibits apoptotic suppressor activity. The BIR motifs region interacts with TNF receptor associated factors 1 and 2 (TRAF1 and TRAF2) to form a heteromeric complex, which is then recruited to the tumor necrosis factor receptor 2 (TNFR2). Interaction with TRAF2 is required for ubiquitination of IKBKE, degradation of NFKBIA and activation of NF-kappa-B. Interacts with RIP1, RIP2, RIP3, RIP4 and USP19. Post-translationally, auto-ubiquitinated and degraded by the proteasome in apoptotic cells. In terms of tissue distribution, highly expressed in fetal lung, and kidney. In the adult, expression is mainly seen in lymphoid tissues, including spleen, thymus and peripheral blood lymphocytes.

The protein resides in the cytoplasm. It localises to the nucleus. It carries out the reaction S-ubiquitinyl-[E2 ubiquitin-conjugating enzyme]-L-cysteine + [acceptor protein]-L-lysine = [E2 ubiquitin-conjugating enzyme]-L-cysteine + N(6)-ubiquitinyl-[acceptor protein]-L-lysine.. Its activity is regulated as follows. USP19 regulates the stability of BIRC3/c-IAP2 by preventing its ubiquitination. In terms of biological role, multi-functional protein which regulates not only caspases and apoptosis, but also modulates inflammatory signaling and immunity, mitogenic kinase signaling and cell proliferation, as well as cell invasion and metastasis. Acts as an E3 ubiquitin-protein ligase regulating NF-kappa-B signaling and regulates both canonical and non-canonical NF-kappa-B signaling by acting in opposite directions: acts as a positive regulator of the canonical pathway and suppresses constitutive activation of non-canonical NF-kappa-B signaling. The target proteins for its E3 ubiquitin-protein ligase activity include: RIPK1, RIPK2, RIPK3, RIPK4, CASP3, CASP7, CASP8, IKBKE, TRAF1, and BCL10. Acts as an important regulator of innate immune signaling via regulation of Toll-like receptors (TLRs), Nodlike receptors (NLRs) and RIG-I like receptors (RLRs), collectively referred to as pattern recognition receptors (PRRs). Protects cells from spontaneous formation of the ripoptosome, a large multi-protein complex that has the capability to kill cancer cells in a caspase-dependent and caspase-independent manner. Suppresses ripoptosome formation by ubiquitinating RIPK1 and CASP8. The chain is Baculoviral IAP repeat-containing protein 3 (BIRC3) from Homo sapiens (Human).